The sequence spans 368 residues: Homoserine O-acetyltransferase (368 aa).

One can recognise an AB hydrolase-1 domain in the interval 43–354 (NVVVVCHALT…DYGHDAFLVE (312 aa)). The active-site Nucleophile is the S148. Substrate is bound at residue R220. Catalysis depends on residues D314 and H348. D349 contributes to the substrate binding site.

It belongs to the AB hydrolase superfamily. MetX family. Homodimer.

Its subcellular location is the cytoplasm. The catalysed reaction is L-homoserine + acetyl-CoA = O-acetyl-L-homoserine + CoA. The protein operates within amino-acid biosynthesis; L-methionine biosynthesis via de novo pathway; O-acetyl-L-homoserine from L-homoserine: step 1/1. Functionally, transfers an acetyl group from acetyl-CoA to L-homoserine, forming acetyl-L-homoserine. This Sulfurimonas autotrophica (strain ATCC BAA-671 / DSM 16294 / JCM 11897 / OK10) protein is Homoserine O-acetyltransferase.